A 554-amino-acid polypeptide reads, in one-letter code: Phosphomethylpyrimidine synthase (554 aa).

Residues Asn191, Met220, Tyr249, His285, 305–307 (SRG), 346–349 (DGLR), and Glu385 contribute to the substrate site. His389 is a Zn(2+) binding site. Tyr412 provides a ligand contact to substrate. His453 serves as a coordination point for Zn(2+). [4Fe-4S] cluster is bound by residues Cys533, Cys536, and Cys541.

It belongs to the ThiC family. Homodimer. [4Fe-4S] cluster serves as cofactor.

It catalyses the reaction 5-amino-1-(5-phospho-beta-D-ribosyl)imidazole + S-adenosyl-L-methionine = 4-amino-2-methyl-5-(phosphooxymethyl)pyrimidine + CO + 5'-deoxyadenosine + formate + L-methionine + 3 H(+). It functions in the pathway cofactor biosynthesis; thiamine diphosphate biosynthesis. Functionally, catalyzes the synthesis of the hydroxymethylpyrimidine phosphate (HMP-P) moiety of thiamine from aminoimidazole ribotide (AIR) in a radical S-adenosyl-L-methionine (SAM)-dependent reaction. In Ehrlichia chaffeensis (strain ATCC CRL-10679 / Arkansas), this protein is Phosphomethylpyrimidine synthase.